Consider the following 266-residue polypeptide: Indole-3-glycerol phosphate synthase (266 aa).

It belongs to the TrpC family.

It catalyses the reaction 1-(2-carboxyphenylamino)-1-deoxy-D-ribulose 5-phosphate + H(+) = (1S,2R)-1-C-(indol-3-yl)glycerol 3-phosphate + CO2 + H2O. It participates in amino-acid biosynthesis; L-tryptophan biosynthesis; L-tryptophan from chorismate: step 4/5. The chain is Indole-3-glycerol phosphate synthase from Janthinobacterium sp. (strain Marseille) (Minibacterium massiliensis).